We begin with the raw amino-acid sequence, 587 residues long: Membrane protein insertase YidC (587 aa).

Transmembrane regions (helical) follow at residues 5 to 25 (SVIG…FMKP), 365 to 385 (GLII…LSLA), 430 to 450 (LGGC…FYVF), 480 to 500 (LPLY…TVFF), and 516 to 536 (IMIW…PSGL).

The protein belongs to the OXA1/ALB3/YidC family. Type 1 subfamily. In terms of assembly, interacts with the Sec translocase complex via SecD. Specifically interacts with transmembrane segments of nascent integral membrane proteins during membrane integration.

It is found in the cell inner membrane. Functionally, required for the insertion and/or proper folding and/or complex formation of integral membrane proteins into the membrane. Involved in integration of membrane proteins that insert both dependently and independently of the Sec translocase complex, as well as at least some lipoproteins. Aids folding of multispanning membrane proteins. In Chlorobaculum parvum (strain DSM 263 / NCIMB 8327) (Chlorobium vibrioforme subsp. thiosulfatophilum), this protein is Membrane protein insertase YidC.